Reading from the N-terminus, the 205-residue chain is ATP phosphoribosyltransferase (205 aa).

The protein belongs to the ATP phosphoribosyltransferase family. Short subfamily.

It is found in the cytoplasm. The enzyme catalyses 1-(5-phospho-beta-D-ribosyl)-ATP + diphosphate = 5-phospho-alpha-D-ribose 1-diphosphate + ATP. The protein operates within amino-acid biosynthesis; L-histidine biosynthesis; L-histidine from 5-phospho-alpha-D-ribose 1-diphosphate: step 1/9. Its function is as follows. Catalyzes the condensation of ATP and 5-phosphoribose 1-diphosphate to form N'-(5'-phosphoribosyl)-ATP (PR-ATP). Has a crucial role in the pathway because the rate of histidine biosynthesis seems to be controlled primarily by regulation of HisG enzymatic activity. The sequence is that of ATP phosphoribosyltransferase from Thermococcus gammatolerans (strain DSM 15229 / JCM 11827 / EJ3).